The following is a 207-amino-acid chain: Large ribosomal subunit protein uL4 (207 aa).

Residues 49 to 73 (AKKRGEVSGGGKKPWKQKGGGRARA) are disordered.

This sequence belongs to the universal ribosomal protein uL4 family. Part of the 50S ribosomal subunit.

In terms of biological role, one of the primary rRNA binding proteins, this protein initially binds near the 5'-end of the 23S rRNA. It is important during the early stages of 50S assembly. It makes multiple contacts with different domains of the 23S rRNA in the assembled 50S subunit and ribosome. Forms part of the polypeptide exit tunnel. This chain is Large ribosomal subunit protein uL4, found in Helicobacter hepaticus (strain ATCC 51449 / 3B1).